The chain runs to 290 residues: Putative phosphoenolpyruvate synthase regulatory protein (290 aa).

Position 170-177 (170-177 (GVSRCGKT)) interacts with ADP.

It belongs to the pyruvate, phosphate/water dikinase regulatory protein family. PSRP subfamily.

It catalyses the reaction [pyruvate, water dikinase] + ADP = [pyruvate, water dikinase]-phosphate + AMP + H(+). The enzyme catalyses [pyruvate, water dikinase]-phosphate + phosphate + H(+) = [pyruvate, water dikinase] + diphosphate. Bifunctional serine/threonine kinase and phosphorylase involved in the regulation of the phosphoenolpyruvate synthase (PEPS) by catalyzing its phosphorylation/dephosphorylation. The protein is Putative phosphoenolpyruvate synthase regulatory protein (ydiA) of Enterobacter agglomerans (Erwinia herbicola).